A 328-amino-acid polypeptide reads, in one-letter code: tRNA uridine(34) hydroxylase (328 aa).

The Rhodanese domain maps to 123–217 (SDPDVLLVDT…YLEEVPQEES (95 aa)). Catalysis depends on Cys-177, which acts as the Cysteine persulfide intermediate.

This sequence belongs to the TrhO family.

It carries out the reaction uridine(34) in tRNA + AH2 + O2 = 5-hydroxyuridine(34) in tRNA + A + H2O. In terms of biological role, catalyzes oxygen-dependent 5-hydroxyuridine (ho5U) modification at position 34 in tRNAs. This Psychromonas ingrahamii (strain DSM 17664 / CCUG 51855 / 37) protein is tRNA uridine(34) hydroxylase.